The chain runs to 336 residues: Ferredoxin--NADP reductase (336 aa).

FAD is bound by residues Asp37, Gln45, Tyr50, Val90, Phe124, Asp286, and Thr327.

Belongs to the ferredoxin--NADP reductase type 2 family. In terms of assembly, homodimer. The cofactor is FAD.

It carries out the reaction 2 reduced [2Fe-2S]-[ferredoxin] + NADP(+) + H(+) = 2 oxidized [2Fe-2S]-[ferredoxin] + NADPH. The protein is Ferredoxin--NADP reductase of Enterococcus faecalis (strain ATCC 700802 / V583).